Here is a 471-residue protein sequence, read N- to C-terminus: Citrate synthase, mitochondrial (471 aa).

A mitochondrion-targeting transit peptide spans 1 to 18; sequence MASLRSATALSRLRSRAG. Active-site residues include histidine 307, histidine 353, and aspartate 408.

Belongs to the citrate synthase family. In terms of assembly, homodimer.

The protein resides in the mitochondrion matrix. The enzyme catalyses oxaloacetate + acetyl-CoA + H2O = citrate + CoA + H(+). The protein operates within carbohydrate metabolism; tricarboxylic acid cycle; isocitrate from oxaloacetate: step 1/2. The protein is Citrate synthase, mitochondrial (CIT) of Citrus maxima (Pomelo).